The sequence spans 224 residues: Inhibitor of apoptosis protein (224 aa).

Residues 29-92 (VDARNQSFAI…GFWSRNCGFM (64 aa)) form a BIR repeat. Zn(2+) contacts are provided by Cys62, Cys65, His82, and Cys89. A C4-type zinc finger spans residues 189–207 (CMTCGIEPIKKDENFCNAC).

Belongs to the asfivirus IAP family. Interacts with subunit p17 of host CASP3.

Its subcellular location is the host cytoplasm. The protein localises to the virion. Its function is as follows. Prevent apoptosis of host cell by inhibiting caspase-3/CASP3 activation to promote the viral replication. Also induces the activation of host NF-kappaB. The protein is Inhibitor of apoptosis protein of Ornithodoros (relapsing fever ticks).